The primary structure comprises 134 residues: SNAPIN protein homolog (134 aa).

Residues 50–124 (QLQAELRGQL…EKEQRRRQAL (75 aa)) are a coiled coil.

The protein belongs to the SNAPIN family. As to quaternary structure, component of the biogenesis of lysosome-related organelles complex-1 (BLOC-1) composed of Blos1, Blos2, Blos3, Blos4, Dysb, Muted, Pldn and Snapin. Interacts with Blos2 and Dysb.

The protein resides in the membrane. The protein localises to the cytoplasm. Its subcellular location is the cytosol. Functionally, component of the biogenesis of lysosome-related organelles complex-1 (BLOC-1) involved in pigment granule biogenesis. May participate in the coupling of lysosomes to microtubule plus-end-directed kinesin motor. The chain is SNAPIN protein homolog from Drosophila melanogaster (Fruit fly).